Consider the following 266-residue polypeptide: MPRFRMTVEYDGTPYYGWQRQENGPSVQGALEAAVRSLTGESVSIRGAGRTDSGVHAVGQVAHIDLSRDWEPYKLRNALNAHLAMAGEAVAVLDAAAVTEDFDARFSALRRHYLYRIICRKSRLALEHKRAWWVSKDLDHERMHEAAQMLVGRHDFTTFRSVHCQANSPVRTLDRLDVTRNGDLIEIRATAQSFLHNQIRSFAGTLKLAGEGGMTPDDVRAALEARDRKACGPVAPPDGLYFMQVDYPDVIPPRRRPEIEMTEDAD.

The active-site Nucleophile is Asp52. Tyr113 provides a ligand contact to substrate.

The protein belongs to the tRNA pseudouridine synthase TruA family. As to quaternary structure, homodimer.

The enzyme catalyses uridine(38/39/40) in tRNA = pseudouridine(38/39/40) in tRNA. Functionally, formation of pseudouridine at positions 38, 39 and 40 in the anticodon stem and loop of transfer RNAs. The chain is tRNA pseudouridine synthase A from Agrobacterium fabrum (strain C58 / ATCC 33970) (Agrobacterium tumefaciens (strain C58)).